Here is a 233-residue protein sequence, read N- to C-terminus: AA9 family lytic polysaccharide monooxygenase A (233 aa).

The first 17 residues, Met1–Ala17, serve as a signal peptide directing secretion. Residues His18 and His90 each coordinate Cu(2+). Cystine bridges form between Cys59-Cys180 and Cys150-Cys233. The N-linked (GlcNAc...) asparagine glycan is linked to Asn132. Residues His166 and Gln175 each contribute to the O2 site. Tyr177 lines the Cu(2+) pocket.

Belongs to the polysaccharide monooxygenase AA9 family. Requires Cu(2+) as cofactor.

It localises to the secreted. It carries out the reaction [(1-&gt;4)-beta-D-glucosyl]n+m + reduced acceptor + O2 = 4-dehydro-beta-D-glucosyl-[(1-&gt;4)-beta-D-glucosyl]n-1 + [(1-&gt;4)-beta-D-glucosyl]m + acceptor + H2O.. Functionally, lytic polysaccharide monooxygenase (LPMO) that depolymerizes crystalline and amorphous polysaccharides via the oxidation of scissile alpha- or beta-(1-4)-glycosidic bonds, yielding C1 and C4 oxidation products. Catalysis by LPMOs requires the reduction of the active-site copper from Cu(II) to Cu(I) by a reducing agent and H(2)O(2) or O(2) as a cosubstrate. Shows endoglucanase activity on tamarind xyloglucan, as well as on beechwood xylan when combined with phosphoric acid swollen cellulose (PASC). Shows no activity on wheat arabinoxylan, konjac glucomannan, acetylated spruce galactoglucomannan, or cellopentaose. This Thermothielavioides terrestris (strain ATCC 38088 / NRRL 8126) (Thielavia terrestris) protein is AA9 family lytic polysaccharide monooxygenase A.